Consider the following 157-residue polypeptide: Cytochrome P450 monooxygenase atG (157 aa).

C97 is a heme binding site.

The protein belongs to the cytochrome P450 family. The cofactor is heme.

Its pathway is secondary metabolite biosynthesis. Functionally, cytochrome P450 monooxygenase; part of the gene cluster that mediates the biosynthesis of terreic acid, a quinone epoxide inhibitor of Bruton's tyrosine kinase (BTK). The first step of the pathway is the synthesis of 6-methylsalicylic acid (6-MSA) by the 6-methylsalicylic acid synthase atX. In the biosynthesis of 6-MSA, atX utilizes one acetyl-CoA and three malonyl-CoAs as its substrates and catalyzes a series of programmed reactions including Claisen condensation, reduction, aldol cyclization, and the hydrolytic cleavage that yields 6-MSA. The 6-methylsalicylate 1-monooxygenase atA then catalyzes the decarboxylative hydroxylation of 6-MSA to 3-methylcatechol. The next step is the conversion of 3-methylcatechol to 3-methyl-1,2,4-benzenetriol by cytochrome P450 monooxygenase atE, which is enhanced by cytochrome P450 monooxygenase atG. Then, the epoxidase atD catalyzes the epoxidation and hydroxyl oxidation of 3-methyl-1,2,4-benzenetriol to terremutin. Lastly, GMC oxidoreductase atC oxidizes terremutin to terreic acid. In Aspergillus terreus (strain NIH 2624 / FGSC A1156), this protein is Cytochrome P450 monooxygenase atG.